The sequence spans 485 residues: Protein disulfide-isomerase 1 (485 aa).

The N-terminal stretch at 1-20 (MSLSVSFIFLLVASIGAVVA) is a signal peptide. 2 consecutive Thioredoxin domains span residues 21–130 (DSEN…KKSG) and 342–470 (YLEG…KYAG). 2 cysteine pairs are disulfide-bonded: Cys52/Cys55 and Cys393/Cys396. Catalysis depends on nucleophile residues Cys393 and Cys396. The Prevents secretion from ER signature appears at 482–485 (HEEL).

Belongs to the protein disulfide isomerase family.

The protein localises to the endoplasmic reticulum lumen. It catalyses the reaction Catalyzes the rearrangement of -S-S- bonds in proteins.. The polypeptide is Protein disulfide-isomerase 1 (pdi-1) (Caenorhabditis elegans).